Reading from the N-terminus, the 113-residue chain is UPF0145 protein MTH_544 (113 aa).

Belongs to the UPF0145 family.

This is UPF0145 protein MTH_544 from Methanothermobacter thermautotrophicus (strain ATCC 29096 / DSM 1053 / JCM 10044 / NBRC 100330 / Delta H) (Methanobacterium thermoautotrophicum).